Consider the following 1365-residue polypeptide: ATP-dependent RNA helicase DHX29 (1365 aa).

Basic residues predominate over residues 1–10 (MGGKNKKHKA). Disordered stretches follow at residues 1–74 (MGGK…NDSG), 174–222 (SQEF…EETT), and 235–257 (AEQQ…EKFD). Composition is skewed to low complexity over residues 11-36 (PGAA…VGEA) and 43-53 (ARPAPAVPTGA). Phosphoserine is present on residues S69, S190, and S198. The span at 187-203 (KFQSVQIQATLSPPQQT) shows a compositional bias: polar residues. The span at 206 to 222 (KRQEEDPKIKPKKEETT) shows a compositional bias: basic and acidic residues. The stretch at 281-308 (LEKNKQGQKEAQEKIRKFQREMETLEDH) forms a coiled coil. The disordered stretch occupies residues 500 to 524 (QQQQQQQQRPESEKGGSEDPEESWE). The region spanning 581–754 (VETLKRHRVV…FTHCPILRIS (174 aa)) is the Helicase ATP-binding domain. An ATP-binding site is contributed by 594 to 601 (GETGSGKS). A DEAH box motif is present at residues 701–704 (DEVH). Residues 848 to 1025 (LILELLVYLD…ELCLHIMKCD (178 aa)) form the Helicase C-terminal domain.

This sequence belongs to the DEAD box helicase family. DEAH subfamily. As to quaternary structure, part of the 43S pre-initiation complex (PIC) that contains at least Met-tRNA, EIF1, EIF1A (EIF1AX or EIF1AY), EIF2S1, EIF2S2, EIF2S3, EIF3A, EIF3B, EIF3C, EIF3D, EIF3E, EIF3F, EIF3G, EIF3H, EIF3I, EIF3J, EIF3K, EIF3L, EIF3M, DHX29 and the 40S ribosomal subunit.

The protein localises to the cytoplasm. The catalysed reaction is ATP + H2O = ADP + phosphate + H(+). ATP-binding RNA helicase involved in translation initiation. Part of the 43S pre-initiation complex that is required for efficient initiation on mRNAs of higher eukaryotes with structured 5'-UTRs by promoting efficient NTPase-dependent 48S complex formation. Specifically binds to the 40S ribosome near the mRNA entrance. Does not possess a processive helicase activity. This Mus musculus (Mouse) protein is ATP-dependent RNA helicase DHX29.